Consider the following 280-residue polypeptide: 2-dehydro-3-deoxyphosphooctonate aldolase (280 aa).

The protein belongs to the KdsA family.

The protein resides in the cytoplasm. The catalysed reaction is D-arabinose 5-phosphate + phosphoenolpyruvate + H2O = 3-deoxy-alpha-D-manno-2-octulosonate-8-phosphate + phosphate. Its pathway is carbohydrate biosynthesis; 3-deoxy-D-manno-octulosonate biosynthesis; 3-deoxy-D-manno-octulosonate from D-ribulose 5-phosphate: step 2/3. It participates in bacterial outer membrane biogenesis; lipopolysaccharide biosynthesis. The polypeptide is 2-dehydro-3-deoxyphosphooctonate aldolase (Neisseria meningitidis serogroup B (strain ATCC BAA-335 / MC58)).